The sequence spans 255 residues: F-box/SPRY domain-containing protein 1 (255 aa).

The region spanning 3-51 is the F-box domain; that stretch reads DRVAALCNYNVLEVVFSYLDLNDLGRCSQVCKSWFHFLNDENSDVWRFH. The B30.2/SPRY domain occupies 61-253; the sequence is TKSELLSPVP…VSMVYCGTPL (193 aa).

This sequence belongs to the FBXO45/Fsn family. Component of an E3 ubiquitin ligase complex composed of hiw and Fsn.

The protein resides in the synapse. It functions in the pathway protein modification; protein ubiquitination. Functionally, required in the presynaptic motoneuron to down-regulate the levels of wnd and restrain synaptic terminal growth at the neuromuscular junction (NMJ). The sequence is that of F-box/SPRY domain-containing protein 1 from Drosophila persimilis (Fruit fly).